A 248-amino-acid polypeptide reads, in one-letter code: MAGHNKWSKVKRLKAVTDARKGKVFSRLSRDITLAAKAGGGDPNGNARLRTLLLKARDANMPADNVDRAVKKGTGELPGVVFEEITYEGYGPGGVAFIVKVTTDNKQRAAQEIRSVFLRWGGNLATTGAVSFQFLHAGQFLIPGAQISEDALMEVALDAGADDVITSEQGYEVRCNIHAFDKVAQALDQKGLKPDSAMIAYLPTTTVPVTDPQLAQSITRLHDALDELDDVQDVFSNDEIDESILPAS.

Belongs to the TACO1 family.

Its subcellular location is the cytoplasm. In Opitutus terrae (strain DSM 11246 / JCM 15787 / PB90-1), this protein is Probable transcriptional regulatory protein Oter_1471.